The chain runs to 273 residues: 4-hydroxy-tetrahydrodipicolinate reductase (273 aa).

NAD(+) is bound by residues 12-17 (GAGGRM) and E38. Residue R39 participates in NADP(+) binding. Residues 102-104 (GTT) and 126-129 (AANF) each bind NAD(+). Residue H159 is the Proton donor/acceptor of the active site. H160 provides a ligand contact to (S)-2,3,4,5-tetrahydrodipicolinate. The active-site Proton donor is K163. 169–170 (GT) contributes to the (S)-2,3,4,5-tetrahydrodipicolinate binding site.

This sequence belongs to the DapB family. As to quaternary structure, homotetramer.

It localises to the cytoplasm. It catalyses the reaction (S)-2,3,4,5-tetrahydrodipicolinate + NAD(+) + H2O = (2S,4S)-4-hydroxy-2,3,4,5-tetrahydrodipicolinate + NADH + H(+). It carries out the reaction (S)-2,3,4,5-tetrahydrodipicolinate + NADP(+) + H2O = (2S,4S)-4-hydroxy-2,3,4,5-tetrahydrodipicolinate + NADPH + H(+). Its pathway is amino-acid biosynthesis; L-lysine biosynthesis via DAP pathway; (S)-tetrahydrodipicolinate from L-aspartate: step 4/4. Functionally, catalyzes the conversion of 4-hydroxy-tetrahydrodipicolinate (HTPA) to tetrahydrodipicolinate. The chain is 4-hydroxy-tetrahydrodipicolinate reductase from Yersinia enterocolitica serotype O:8 / biotype 1B (strain NCTC 13174 / 8081).